Reading from the N-terminus, the 853-residue chain is DNA mismatch repair protein MutS (853 aa).

Residue 614-621 coordinates ATP; the sequence is GPNMGGKS.

This sequence belongs to the DNA mismatch repair MutS family.

Functionally, this protein is involved in the repair of mismatches in DNA. It is possible that it carries out the mismatch recognition step. This protein has a weak ATPase activity. The polypeptide is DNA mismatch repair protein MutS (Escherichia coli (strain SMS-3-5 / SECEC)).